A 49-amino-acid chain; its full sequence is Large ribosomal subunit protein bL33B (49 aa).

It belongs to the bacterial ribosomal protein bL33 family.

The chain is Large ribosomal subunit protein bL33B from Geobacillus kaustophilus (strain HTA426).